Here is a 179-residue protein sequence, read N- to C-terminus: Riboflavin kinase (179 aa).

61-66 (GDGEGR) provides a ligand contact to CDP. Mg(2+) contacts are provided by Thr90 and Asn92. Positions 147 and 155 each coordinate FMN. Position 160-163 (160-163 (VELR)) interacts with CDP.

This sequence belongs to the archaeal riboflavin kinase family. Mg(2+) serves as cofactor.

It carries out the reaction riboflavin + CTP = CDP + FMN + H(+). The protein operates within cofactor biosynthesis; FMN biosynthesis; FMN from riboflavin (CTP route): step 1/1. Functionally, catalyzes the CTP-dependent phosphorylation of riboflavin (vitamin B2) to form flavin mononucleotide (FMN). This is Riboflavin kinase from Ignicoccus hospitalis (strain KIN4/I / DSM 18386 / JCM 14125).